A 318-amino-acid chain; its full sequence is Beta-sarcoglycan (318 aa).

Positions methionine 1–valine 32 are disordered. The Cytoplasmic portion of the chain corresponds to methionine 1 to alanine 65. The span at serine 21–valine 32 shows a compositional bias: basic and acidic residues. Residues isoleucine 66–isoleucine 86 traverse the membrane as a helical; Signal-anchor for type II membrane protein segment. Residues tryptophan 87 to histidine 318 are Extracellular-facing. N-linked (GlcNAc...) asparagine glycans are attached at residues asparagine 158, asparagine 211, and asparagine 258. Intrachain disulfides connect cysteine 288–cysteine 314 and cysteine 290–cysteine 307.

It belongs to the sarcoglycan beta/delta/gamma/zeta family. As to quaternary structure, cross-link to form 2 major subcomplexes: one consisting of SGCB, SGCD and SGCG and the other consisting of SGCB and SGCD. The association between SGCB and SGCG is particularly strong while SGCA is loosely associated with the other sarcoglycans. Post-translationally, disulfide bonds are present. In terms of tissue distribution, highest expression in heart and skeletal muscle. Low expression in brain, kidney, placenta, pancreas and lung. High expression in fetal brain. Also found in fetal lung, kidney and liver.

The protein localises to the cell membrane. The protein resides in the sarcolemma. It is found in the cytoplasm. Its subcellular location is the cytoskeleton. Its function is as follows. Component of the sarcoglycan complex, a subcomplex of the dystrophin-glycoprotein complex which forms a link between the F-actin cytoskeleton and the extracellular matrix. The chain is Beta-sarcoglycan (SGCB) from Homo sapiens (Human).